A 257-amino-acid chain; its full sequence is Thiazole synthase (257 aa).

The active-site Schiff-base intermediate with DXP is lysine 96. 1-deoxy-D-xylulose 5-phosphate-binding positions include glycine 157, 184-185, and 206-207; these read AG and NT.

The protein belongs to the ThiG family. In terms of assembly, homotetramer. Forms heterodimers with either ThiH or ThiS.

It localises to the cytoplasm. It carries out the reaction [ThiS sulfur-carrier protein]-C-terminal-Gly-aminoethanethioate + 2-iminoacetate + 1-deoxy-D-xylulose 5-phosphate = [ThiS sulfur-carrier protein]-C-terminal Gly-Gly + 2-[(2R,5Z)-2-carboxy-4-methylthiazol-5(2H)-ylidene]ethyl phosphate + 2 H2O + H(+). It functions in the pathway cofactor biosynthesis; thiamine diphosphate biosynthesis. Functionally, catalyzes the rearrangement of 1-deoxy-D-xylulose 5-phosphate (DXP) to produce the thiazole phosphate moiety of thiamine. Sulfur is provided by the thiocarboxylate moiety of the carrier protein ThiS. In vitro, sulfur can be provided by H(2)S. This chain is Thiazole synthase, found in Rhizobium rhizogenes (strain K84 / ATCC BAA-868) (Agrobacterium radiobacter).